A 216-amino-acid chain; its full sequence is Nicotinamidase (216 aa).

Residue D8 is part of the active site. Zn(2+) contacts are provided by D51, H53, and H94. The active site involves K122. C167 functions as the Nucleophile in the catalytic mechanism.

The protein belongs to the isochorismatase family.

The protein localises to the cytoplasm. It localises to the nucleus. The protein resides in the peroxisome. The enzyme catalyses nicotinamide + H2O = nicotinate + NH4(+). It functions in the pathway cofactor biosynthesis; nicotinate biosynthesis; nicotinate from nicotinamide: step 1/1. With respect to regulation, inhibited by N-ethylmaleimide, HgCl(2) and PCMB. Competitively inhibited by NAD, NMN and 3-acetylpyridine. Its function is as follows. Catalyzes the deamidation of nicotinamide, an early step in the NAD(+) salvage pathway. Positively regulates SIR2-mediated silencing and longevity by preventing the accumulation of intracellular nicotinamide, an inhibitor of SIR2, during times of stress. Also acts on nicotinyl hydroxamate. The polypeptide is Nicotinamidase (PNC1) (Saccharomyces cerevisiae (strain ATCC 204508 / S288c) (Baker's yeast)).